The following is a 401-amino-acid chain: Calcium-responsive transcription coactivator (401 aa).

Residues 1–148 are N-terminal auto-inhibitory domain; necessary for interaction with SMARCA4/BRG1; the sequence is MSVAFASARP…TLPTTSMSMS (148 aa). Positions 50 to 53 match the SH2-binding motif; that stretch reads YQQI. Disordered stretches follow at residues 72–171 and 214–401; these read QSLL…VPMQ and TRAR…NYQQ. Over residues 85-106 the composition is skewed to low complexity; the sequence is LGPGALSQSGSSQGLHPQGSLS. Residues 128-137 are compositionally biased toward polar residues; that stretch reads NHVSMQQTAQ. The segment covering 138–149 has biased composition (low complexity); that stretch reads STLPTTSMSMSG. A methionine-rich intra-molecular domain region spans residues 149–237; that stretch reads GSGHGTGPGY…GGSMMGQRPM (89 aa). The tract at residues 251–322 is MFD domain; the sequence is YLGQEEYYSE…SQYSQQQAGY (72 aa). Composition is skewed to polar residues over residues 260-276 and 285-294; these read EQYS…SQQY and AYQQSSYTEQ. Over residues 295 to 304 the composition is skewed to basic and acidic residues; it reads SYDRSFEDPT. Low complexity predominate over residues 310-374; sequence GGNSQYSQQQ…QGQGQQYGSY (65 aa). The necessary for nuclear localization stretch occupies residues 339 to 401; it reads NQQSYPGQQQ…EQGQYGNYQQ (63 aa). The short motif at 358–361 is the SH2-binding element; that stretch reads SQYS. Positions 375–387 are enriched in polar residues; it reads RTSQTGPSAQQQR. Positions 376 to 384 match the SH3-binding motif; sequence TSQTGPSAQ. Low complexity predominate over residues 389 to 401; sequence YGYEQGQYGNYQQ. Positions 392–401 are necessary for interaction with CREBBP and for the recruitment of CREBBP to the nuclear bodies; sequence EQGQYGNYQQ. The short motif at 396 to 399 is the SH2-binding element; that stretch reads YGNY.

The protein belongs to the SS18 family. In terms of assembly, homodimer. Dimerization may be necessary for its function in neuronal dendritic development. Interacts (via C-terminus) with CREBBP (via N-terminus), EP300 and SMARCA4/BRG1. Interacts with the nBAF complex. Association with CREBBP facilitates transcription while the association with SMARCA4/BRG1 suppresses CREST-mediated transcription in resting neurons. Brain (at protein level). Also found in the heart, liver, kidney and testis.

Its subcellular location is the nucleus. It localises to the chromosome. The protein resides in the centromere. The protein localises to the kinetochore. Its function is as follows. Transcriptional activator which is required for calcium-dependent dendritic growth and branching in cortical neurons. Recruits CREB-binding protein (CREBBP) to nuclear bodies. Component of the CREST-BRG1 complex, a multiprotein complex that regulates promoter activation by orchestrating a calcium-dependent release of a repressor complex and a recruitment of an activator complex. In resting neurons, transcription of the c-FOS promoter is inhibited by BRG1-dependent recruitment of a phospho-RB1-HDAC1 repressor complex. Upon calcium influx, RB1 is dephosphorylated by calcineurin, which leads to release of the repressor complex. At the same time, there is increased recruitment of CREBBP to the promoter by a CREST-dependent mechanism, which leads to transcriptional activation. The CREST-BRG1 complex also binds to the NR2B promoter, and activity-dependent induction of NR2B expression involves a release of HDAC1 and recruitment of CREBBP. This is Calcium-responsive transcription coactivator (Ss18l1) from Rattus norvegicus (Rat).